The sequence spans 146 residues: Putative phosphotransferase enzyme IIA component YadI (146 aa).

Residues 1 to 124 form the PTS EIIA type-4 domain; it reads MLGWVITCHD…RIVELGAPEV (124 aa). Catalysis depends on H9, which acts as the Tele-phosphohistidine intermediate.

It localises to the cytoplasm. The phosphoenolpyruvate-dependent sugar phosphotransferase system (sugar PTS), a major carbohydrate active -transport system, catalyzes the phosphorylation of incoming sugar substrates concomitantly with their translocation across the cell membrane. This chain is Putative phosphotransferase enzyme IIA component YadI (yadI), found in Escherichia coli (strain K12).